A 139-amino-acid chain; its full sequence is Peptide methionine sulfoxide reductase MsrB (139 aa).

The MsrB domain maps to Asp8 to Ala130. Zn(2+) is bound by residues Cys47, Cys50, Cys96, and Cys99. Residue Cys119 is the Nucleophile of the active site.

It belongs to the MsrB Met sulfoxide reductase family. It depends on Zn(2+) as a cofactor.

The enzyme catalyses L-methionyl-[protein] + [thioredoxin]-disulfide + H2O = L-methionyl-(R)-S-oxide-[protein] + [thioredoxin]-dithiol. The protein is Peptide methionine sulfoxide reductase MsrB of Hahella chejuensis (strain KCTC 2396).